Reading from the N-terminus, the 267-residue chain is DCN1-like protein 2 (267 aa).

The disordered stretch occupies residues 1–48 (MTRKYTKKSSGSTASTTNSTAEIVDLTTSTSSVGKKRKSPDEKAQPIT). A compositionally biased stretch (low complexity) spans 8–21 (KSSGSTASTTNSTA). Positions 75-262 (HYTYLYTYIF…LLDQFSEWVQ (188 aa)) constitute a DCUN1 domain.

In Dictyostelium discoideum (Social amoeba), this protein is DCN1-like protein 2.